Reading from the N-terminus, the 336-residue chain is METFCGFQKEEEQMDLPPGFRFHPTDEELITHYLHKKVLDTSFSAKAIGEVDLNKSEPWELPWMAKMGEKEWYFFCVRDRKYPTGLRTNRATEAGYWKATGKDKEIYRGKSLVGMKKTLVFYRGRAPKGQKTNWVMHEYRLEGKFSAHNLPKTAKNEWVICRVFQKSAGGKKIPISSLIRIGSLGTDFNPSLLPSLTDSSPYNDKTKTEPVYVPCFSNQTDQNQGTTLNCFSSPVLNSIQADIFHRIPLYQTQSLQVSMNLQSPVLTQEHSVLHAMIENNRRQSLKTMSVSQETGVSTDMNTDISSDFEFGKRRFDSQEDPSSSTGPVDLEPFWNY.

An NAC domain is found at 16–166; sequence LPPGFRFHPT…EWVICRVFQK (151 aa). Residues 113–172 mediate DNA binding; sequence VGMKKTLVFYRGRAPKGQKTNWVMHEYRLEGKFSAHNLPKTAKNEWVICRVFQKSAGGKK. Residues 313–336 are disordered; the sequence is RRFDSQEDPSSSTGPVDLEPFWNY.

It localises to the nucleus. Functionally, binds to the promoter regions of genes involved in chlorophyll catabolic processes, such as NYC1, SGR1, SGR2 and PAO. The protein is NAC domain-containing protein 100 of Arabidopsis thaliana (Mouse-ear cress).